The sequence spans 194 residues: uncharacterized protein (194 aa).

Disordered stretches follow at residues 1–72 and 113–194; these read MAAK…PAAE and VLIP…SLAV. Residues 26-39 are compositionally biased toward basic and acidic residues; sequence AEGRSSEGRKERTA. Polar residues predominate over residues 146–171; it reads GSSSTSRNQVASLAYRTQNTAASQPR.

This is an uncharacterized protein from Homo sapiens (Human).